Here is a 1173-residue protein sequence, read N- to C-terminus: Paired amphipathic helix protein Sin3-like 6 (1173 aa).

The interval N40 to E75 is disordered. Residues A55 to E75 show a composition bias toward basic and acidic residues. PAH domains follow at residues L79–G148 and I162–C232. Disordered regions lie at residues A236–Y337, T655–P697, and K740–K813. Composition is skewed to basic and acidic residues over residues C264–R276 and R301–K319. The span at S320–Y337 shows a compositional bias: polar residues. A compositionally biased stretch (polar residues) spans P750–N765. Over residues R778 to E810 the composition is skewed to basic and acidic residues.

The protein resides in the nucleus. In terms of biological role, acts as a transcriptional repressor. Plays roles in regulating gene expression and genome stability. This chain is Paired amphipathic helix protein Sin3-like 6 (SNL6), found in Arabidopsis thaliana (Mouse-ear cress).